A 260-amino-acid polypeptide reads, in one-letter code: Phosphate import ATP-binding protein PstB (260 aa).

Positions Met-13–Ile-255 constitute an ABC transporter domain. Gly-45 to Ser-52 serves as a coordination point for ATP.

It belongs to the ABC transporter superfamily. Phosphate importer (TC 3.A.1.7) family. The complex is composed of two ATP-binding proteins (PstB), two transmembrane proteins (PstC and PstA) and a solute-binding protein (PstS).

The protein resides in the cell inner membrane. The enzyme catalyses phosphate(out) + ATP + H2O = ADP + 2 phosphate(in) + H(+). In terms of biological role, part of the ABC transporter complex PstSACB involved in phosphate import. Responsible for energy coupling to the transport system. The polypeptide is Phosphate import ATP-binding protein PstB (Sphingopyxis alaskensis (strain DSM 13593 / LMG 18877 / RB2256) (Sphingomonas alaskensis)).